A 346-amino-acid polypeptide reads, in one-letter code: Retinal homeobox protein Rx (346 aa).

An Octapeptide motif motif is present at residues His33–Gly40. 2 disordered regions span residues Gly46–Thr145 and Gln194–Ala318. Basic and acidic residues predominate over residues Arg55–Leu67. Over residues Pro83 to Ala92 the composition is skewed to pro residues. Positions His136 to Glu195 form a DNA-binding region, homeobox. The span at Ser207 to Gly225 shows a compositional bias: low complexity. Over residues Ala226–Gly236 the composition is skewed to gly residues. Low complexity predominate over residues Gly237 to Gly246. Pro residues predominate over residues Tyr274 to Pro304. The OAR signature appears at Ser323–Ile336. Residues Arg329 to Lys333 carry the Nuclear localization signal motif.

This sequence belongs to the paired homeobox family. Bicoid subfamily. Expressed in the developing eye and weakly expressed in the adult retina.

Its subcellular location is the nucleus. Functionally, plays a critical role in eye formation by regulating the initial specification of retinal cells and/or their subsequent proliferation. Binds to the photoreceptor conserved element-I (PCE-1/Ret 1) in the photoreceptor cell-specific arrestin promoter. The polypeptide is Retinal homeobox protein Rx (RAX) (Homo sapiens (Human)).